The following is a 362-amino-acid chain: Heme A synthase (362 aa).

5 consecutive transmembrane segments (helical) span residues 12–32 (AVKI…LVGG), 102–122 (VIGL…HLGG), 128–148 (LWLI…MVAS), 159–179 (ERLA…VWTL), and 198–218 (AAAL…VAGL). Histidine 262 lines the heme pocket. 3 consecutive transmembrane segments (helical) span residues 264–286 (MLAY…ARAG), 291–311 (GAVW…FTLL), and 314–334 (VPIG…MLGV). Histidine 322 is a binding site for heme.

The protein belongs to the COX15/CtaA family. Type 2 subfamily. Interacts with CtaB. Heme b serves as cofactor.

It is found in the cell membrane. The catalysed reaction is Fe(II)-heme o + 2 A + H2O = Fe(II)-heme a + 2 AH2. It functions in the pathway porphyrin-containing compound metabolism; heme A biosynthesis; heme A from heme O: step 1/1. Its function is as follows. Catalyzes the conversion of heme O to heme A by two successive hydroxylations of the methyl group at C8. The first hydroxylation forms heme I, the second hydroxylation results in an unstable dihydroxymethyl group, which spontaneously dehydrates, resulting in the formyl group of heme A. The polypeptide is Heme A synthase (Rhodopseudomonas palustris (strain BisA53)).